The primary structure comprises 639 residues: Eukaryotic translation initiation factor 2-alpha kinase 2 (639 aa).

Residues 171–588 (FEEYSLLGRG…LEVLNCGLLL (418 aa)) form the Protein kinase domain. ATP contacts are provided by residues 177-185 (LGRGGFGSV) and Lys-200. Residues 298–320 (ISTSRKSSYSSTTESSNFENLES) are compositionally biased toward low complexity. The segment at 298 to 322 (ISTSRKSSYSSTTESSNFENLESPR) is disordered. Asp-417 (proton acceptor) is an active-site residue.

It belongs to the protein kinase superfamily. Ser/Thr protein kinase family. GCN2 subfamily. Autophosphorylated.

The enzyme catalyses L-seryl-[protein] + ATP = O-phospho-L-seryl-[protein] + ADP + H(+). It carries out the reaction L-threonyl-[protein] + ATP = O-phospho-L-threonyl-[protein] + ADP + H(+). In terms of biological role, mediates down-regulation of protein synthesis in response to stress conditions by the phosphorylation of the alpha subunit of eIF-2 (tif211) on 'Ser-52'. Protein synthesis is inhibited at the level of initiation. Activity is inhibited in the presence of heme. This chain is Eukaryotic translation initiation factor 2-alpha kinase 2 (hri2), found in Schizosaccharomyces pombe (strain 972 / ATCC 24843) (Fission yeast).